The following is a 390-amino-acid chain: Cystathionine beta-lyase (390 aa).

The residue at position 202 (K202) is an N6-(pyridoxal phosphate)lysine.

The protein belongs to the trans-sulfuration enzymes family. Pyridoxal 5'-phosphate is required as a cofactor.

The protein localises to the cytoplasm. It is found in the nucleus. It carries out the reaction L,L-cystathionine + H2O = L-homocysteine + pyruvate + NH4(+). The catalysed reaction is an S-substituted L-cysteine + H2O = a thiol + pyruvate + NH4(+). Its pathway is amino-acid biosynthesis; L-methionine biosynthesis via de novo pathway; L-homocysteine from L-cystathionine: step 1/1. This Schizosaccharomyces pombe (strain 972 / ATCC 24843) (Fission yeast) protein is Cystathionine beta-lyase (str3).